Reading from the N-terminus, the 262-residue chain is Small ribosomal subunit protein uS2 (262 aa).

The interval 225–262 (KQGEQLTEEAKPEDKEDEKGQAEEKEVKEENNSANKEE) is disordered. A compositionally biased stretch (basic and acidic residues) spans 232–262 (EEAKPEDKEDEKGQAEEKEVKEENNSANKEE).

This sequence belongs to the universal ribosomal protein uS2 family.

The protein is Small ribosomal subunit protein uS2 of Halothermothrix orenii (strain H 168 / OCM 544 / DSM 9562).